The sequence spans 206 residues: Large ribosomal subunit protein uL4 (206 aa).

The protein belongs to the universal ribosomal protein uL4 family. Part of the 50S ribosomal subunit.

In terms of biological role, one of the primary rRNA binding proteins, this protein initially binds near the 5'-end of the 23S rRNA. It is important during the early stages of 50S assembly. It makes multiple contacts with different domains of the 23S rRNA in the assembled 50S subunit and ribosome. Functionally, forms part of the polypeptide exit tunnel. In Rhodopseudomonas palustris (strain BisB18), this protein is Large ribosomal subunit protein uL4.